Consider the following 211-residue polypeptide: Large ribosomal subunit protein uL3 (211 aa).

The disordered stretch occupies residues 122-156 (NQKRNNFGRGPMSHGSKNHRAPGSIGAGTTPGRVY).

It belongs to the universal ribosomal protein uL3 family. Part of the 50S ribosomal subunit. Forms a cluster with proteins L14 and L19.

Functionally, one of the primary rRNA binding proteins, it binds directly near the 3'-end of the 23S rRNA, where it nucleates assembly of the 50S subunit. The chain is Large ribosomal subunit protein uL3 from Nostoc sp. (strain PCC 7120 / SAG 25.82 / UTEX 2576).